The sequence spans 81 residues: Relaxin-like protein AGF (81 aa).

Intrachain disulfides connect Cys14–Cys66, Cys26–Cys79, and Cys65–Cys70. The N-linked (GlcNAc...) asparagine glycan is linked to Asn37.

The protein belongs to the insulin family. In terms of assembly, heterodimer of a B chain and an A chain linked by two disulfide bonds.

The protein localises to the secreted. Its function is as follows. Uncertain. This is Relaxin-like protein AGF from Hypanus sabinus (Atlantic stingray).